A 319-amino-acid polypeptide reads, in one-letter code: MAQPSNYWKQDVLPLSILMLTLVATECTIGIIASGIVMAVNAVSWVQKKAISITTRILLLLSVSRIGLQSIMLIEITSSIFNVAFYNSVLYRVSNVSFVFLNYCSLWFAALLSFFHFVKIANFSYPLFFKLKWRISELMPWLLWLSVFISFSSSMFFSKHKFTVNNNNSLSNNICNFTMKLYVVETNVVNVSFLFISGILPPLTMFVATATLLIFSLRRHTLNMRNSATGSRNPCIEAHMQAIKETSCFLFLYILNAAALLLSTSNIVDASLFWSIVIRIVLPVYPAGHSVLLIQNNPGLRRTWKHLQSQIHLYLQNRF.

The Extracellular portion of the chain corresponds to 1–16 (MAQPSNYWKQDVLPLS). Residues 17–37 (ILMLTLVATECTIGIIASGIV) traverse the membrane as a helical segment. Residues 38-65 (MAVNAVSWVQKKAISITTRILLLLSVSR) are Cytoplasmic-facing. The chain crosses the membrane as a helical span at residues 66–86 (IGLQSIMLIEITSSIFNVAFY). Residues 87–97 (NSVLYRVSNVS) lie on the Extracellular side of the membrane. Asn95 carries N-linked (GlcNAc...) asparagine glycosylation. The chain crosses the membrane as a helical span at residues 98–118 (FVFLNYCSLWFAALLSFFHFV). Residues 119-137 (KIANFSYPLFFKLKWRISE) lie on the Cytoplasmic side of the membrane. Residues 138–158 (LMPWLLWLSVFISFSSSMFFS) form a helical membrane-spanning segment. Topologically, residues 159–194 (KHKFTVNNNNSLSNNICNFTMKLYVVETNVVNVSFL) are extracellular. N-linked (GlcNAc...) asparagine glycans are attached at residues Asn167, Asn176, and Asn190. The helical transmembrane segment at 195-215 (FISGILPPLTMFVATATLLIF) threads the bilayer. Residues 216 to 247 (SLRRHTLNMRNSATGSRNPCIEAHMQAIKETS) are Cytoplasmic-facing. A helical transmembrane segment spans residues 248-268 (CFLFLYILNAAALLLSTSNIV). At 269-273 (DASLF) the chain is on the extracellular side. A helical transmembrane segment spans residues 274-294 (WSIVIRIVLPVYPAGHSVLLI). Residues 295 to 319 (QNNPGLRRTWKHLQSQIHLYLQNRF) are Cytoplasmic-facing.

The protein belongs to the G-protein coupled receptor T2R family.

It localises to the membrane. Its function is as follows. Putative taste receptor which may play a role in the perception of bitterness. The chain is Taste receptor type 2 member 39 (Tas2r39) from Mus musculus (Mouse).